Consider the following 462-residue polypeptide: MVGFSGDTIAAIATAIVPQQGSVGIVRLSGAAATEIARQIFQIAGQQPWESHRILYGYIRDPESGRLVDEALLLPMLAPRSYTREDVVELHCHGGLMPVQQTLQLCIRAGARLAEPGEFTLRAFLNGRLDLSQAESIADLISAQSPQAAQAALGSLQGKLGHPIRQLRDRCLDILAEVEARIDFEDDLPPLDLEAIAAQLTAAGADMQAILSTADRGELLRTGLKIAIVGRPNVGKSSLLNAWSRCDRAIVTDLPGRTRDLVESQLIVGGIPVQVLDTAGIRETSDQVEQIGVERSRRAAQSADLVLLTIDASAGWSAEDQTIWEAVSDRPILLVINKRDRLSEAERHAIALPQQEFKAIVWTAAAQQKGIEDLEAAILAAVGTGDLTSANWDWALNQRQVAALTTAQTALRRVEETLQAQLPLDFWTIDLREAIAALGSITGEGIAESMLDLIFSRFCIGK.

Positions 27, 89, and 128 each coordinate (6S)-5-formyl-5,6,7,8-tetrahydrofolate. Residues 223–383 (GLKIAIVGRP…LEAAILAAVG (161 aa)) form the TrmE-type G domain. GTP contacts are provided by residues 233-238 (NVGKSS), 252-258 (TDLPGRT), and 277-280 (DTAG). Mg(2+) contacts are provided by Ser-237 and Thr-258. Lys-462 serves as a coordination point for (6S)-5-formyl-5,6,7,8-tetrahydrofolate.

Belongs to the TRAFAC class TrmE-Era-EngA-EngB-Septin-like GTPase superfamily. TrmE GTPase family. In terms of assembly, homodimer. Heterotetramer of two MnmE and two MnmG subunits. K(+) is required as a cofactor.

The protein localises to the cytoplasm. In terms of biological role, exhibits a very high intrinsic GTPase hydrolysis rate. Involved in the addition of a carboxymethylaminomethyl (cmnm) group at the wobble position (U34) of certain tRNAs, forming tRNA-cmnm(5)s(2)U34. This Synechococcus sp. (strain ATCC 27144 / PCC 6301 / SAUG 1402/1) (Anacystis nidulans) protein is tRNA modification GTPase MnmE.